Here is a 201-residue protein sequence, read N- to C-terminus: Recombination protein RecR (201 aa).

Residues 60 to 75 (CTSCGNVDTSDPCTIC) form a C4-type zinc finger. The region spanning 83 to 178 (TTLVVVEDVS…KVTRLAHGVP (96 aa)) is the Toprim domain.

It belongs to the RecR family.

May play a role in DNA repair. It seems to be involved in an RecBC-independent recombinational process of DNA repair. It may act with RecF and RecO. The chain is Recombination protein RecR from Methylobacterium radiotolerans (strain ATCC 27329 / DSM 1819 / JCM 2831 / NBRC 15690 / NCIMB 10815 / 0-1).